The chain runs to 105 residues: Large ribosomal subunit protein bL21 (105 aa).

Belongs to the bacterial ribosomal protein bL21 family. Part of the 50S ribosomal subunit. Contacts protein L20.

This protein binds to 23S rRNA in the presence of protein L20. This is Large ribosomal subunit protein bL21 from Blochmanniella pennsylvanica (strain BPEN).